Reading from the N-terminus, the 780-residue chain is Reticulon-1 (780 aa).

Disordered stretches follow at residues 1-76 (MAAP…VAME), 128-176 (QKEN…AEST), 201-223 (RPQE…LDFK), and 293-576 (MTAT…IPGP). Residues Ser13 and Ser70 each carry the phosphoserine modification. Ser327 carries the phosphoserine modification. Low complexity predominate over residues 328 to 341 (PGSVTPPSSGTEPS). 3 positions are modified to phosphoserine: Ser350, Ser352, and Ser487. The span at 497–512 (AIREETGSRATEERAP) shows a compositional bias: basic and acidic residues. Residues 593 to 780 (AIDLLYWRDI…KIPGAKRHAE (188 aa)) form the Reticulon domain. 2 consecutive transmembrane segments (helical) span residues 607–627 (IVFG…VVSV) and 709–729 (FAVL…LTLL).

In terms of assembly, interacts with NDRG1. Interacts with BACE1. Interacts with TMEM33.

It is found in the endoplasmic reticulum membrane. The protein resides in the golgi apparatus membrane. Its function is as follows. Inhibits amyloid precursor protein processing, probably by blocking BACE1 activity. This Mus musculus (Mouse) protein is Reticulon-1 (Rtn1).